We begin with the raw amino-acid sequence, 219 residues long: Histone H1.4 (219 aa).

Positions 1–15 (MSETAPAAPAAPAPA) are enriched in low complexity. Residues 1–41 (MSETAPAAPAAPAPAEKTPVKKKARKSAGAAKRKASGPPVS) form a disordered region. Ser2 bears the N-acetylserine mark. Phosphoserine is present on Ser2. At Lys17 the chain carries N6-acetyllysine. A Phosphothreonine modification is found at Thr18. Over residues 20–35 (VKKKARKSAGAAKRKA) the composition is skewed to basic residues. N6-acetyllysine; alternate is present on Lys26. An N6-methyllysine; alternate modification is found at Lys26. Lys34 carries the post-translational modification N6-(beta-hydroxybutyryl)lysine; alternate. At Lys34 the chain carries N6-succinyllysine; alternate. Residue Ser36 is modified to Phosphoserine. In terms of domain architecture, H15 spans 36-109 (SGPPVSELIT…GASGSFKLNK (74 aa)). Position 52 is an N6-(beta-hydroxybutyryl)lysine (Lys52). Arg54 is subject to Citrulline. Residues Lys64, Lys85, Lys90, and Lys106 each carry the N6-(beta-hydroxybutyryl)lysine modification. The disordered stretch occupies residues 91 to 219 (GTLVQTKGTG…KPKKAPAKKK (129 aa)). Over residues 119–140 (KPKKAGAAKPKKPAGAAKKPKK) the composition is skewed to basic residues. At Thr146 the chain carries Phosphothreonine. Basic residues-rich tracts occupy residues 149–160 (KGAKKTPKKAKK) and 168–185 (KKAK…KKAP). Phosphoserine is present on Ser187. The span at 192-219 (KAVKPKAAKPKAAKPKTAKPKKAPAKKK) shows a compositional bias: basic residues.

It belongs to the histone H1/H5 family. H1 histones are progressively phosphorylated during the cell cycle, becoming maximally phosphorylated during late G2 phase and M phase, and being dephosphorylated sharply thereafter. Post-translationally, acetylated at Lys-26. Deacetylated at Lys-26 by SIRT1. In terms of processing, citrullination at Arg-54 (H1R54ci) by PADI4 takes place within the DNA-binding site of H1 and results in its displacement from chromatin and global chromatin decondensation, thereby promoting pluripotency and stem cell maintenance.

The protein localises to the nucleus. Its subcellular location is the chromosome. In terms of biological role, histone H1 protein binds to linker DNA between nucleosomes forming the macromolecular structure known as the chromatin fiber. Histones H1 are necessary for the condensation of nucleosome chains into higher-order structured fibers. Also acts as a regulator of individual gene transcription through chromatin remodeling, nucleosome spacing and DNA methylation. This Oryctolagus cuniculus (Rabbit) protein is Histone H1.4.